A 373-amino-acid chain; its full sequence is XK-related protein 9 (373 aa).

8 helical membrane-spanning segments follow: residues 8–28 (FMMS…DIWV), 38–58 (YVFS…AQCF), 166–186 (AAIM…QVAL), 203–223 (ITYL…VVLL), 224–244 (LFLN…LGII), 256–276 (CISM…FTFF), 295–315 (VLGT…IFNP), and 318–338 (FIPI…FLIV).

The protein belongs to the XK family. Post-translationally, undergoes proteolytic processing by caspase-3 (CASP3), caspase-6 (CASP6) and caspase-7 (CASP7) to generate the XK-related protein 9, processed form, leading to its activation.

It is found in the cell membrane. The enzyme catalyses a 1,2-diacyl-sn-glycero-3-phospho-L-serine(in) = a 1,2-diacyl-sn-glycero-3-phospho-L-serine(out). Its activity is regulated as follows. Activated upon caspase cleavage to generate the XK-related protein 9, processed form. Does not act prior the onset of apoptosis. Its function is as follows. Phospholipid scramblase that promotes phosphatidylserine exposure on apoptotic cell surface. Phosphatidylserine is a specific marker only present at the surface of apoptotic cells and acts as a specific signal for engulfment. The polypeptide is XK-related protein 9 (Homo sapiens (Human)).